The primary structure comprises 179 residues: Large ribosomal subunit protein uL5 (179 aa).

It belongs to the universal ribosomal protein uL5 family. As to quaternary structure, part of the 50S ribosomal subunit; part of the 5S rRNA/L5/L18/L25 subcomplex. Contacts the 5S rRNA and the P site tRNA. Forms a bridge to the 30S subunit in the 70S ribosome.

In terms of biological role, this is one of the proteins that bind and probably mediate the attachment of the 5S RNA into the large ribosomal subunit, where it forms part of the central protuberance. In the 70S ribosome it contacts protein S13 of the 30S subunit (bridge B1b), connecting the 2 subunits; this bridge is implicated in subunit movement. Contacts the P site tRNA; the 5S rRNA and some of its associated proteins might help stabilize positioning of ribosome-bound tRNAs. This Haemophilus ducreyi (strain 35000HP / ATCC 700724) protein is Large ribosomal subunit protein uL5.